Consider the following 364-residue polypeptide: Bifunctional protein Rv2228c (364 aa).

The RNase H type-1 domain occupies 1 to 139 (MKVVIEADGG…MDAAAQSAAA (139 aa)). Mg(2+)-binding residues include Asp-8, Glu-49, Asp-73, and Asp-123. His-172 functions as the Tele-phosphohistidine intermediate in the catalytic mechanism. Catalysis depends on Glu-246, which acts as the Proton donor/acceptor; for phosphatase activity.

This sequence in the N-terminal section; belongs to the RNase H family. In the C-terminal section; belongs to the histidine phosphatase superfamily. In terms of assembly, the N-terminal domain alone is monomeric in solution but associates in the crystal to form a dimer. Mg(2+) serves as cofactor.

It catalyses the reaction Endonucleolytic cleavage to 5'-phosphomonoester.. The enzyme catalyses adenosylcob(III)alamin 5'-phosphate + H2O = adenosylcob(III)alamin + phosphate. The catalysed reaction is alpha-ribazole 5'-phosphate + H2O = alpha-ribazole + phosphate. Its pathway is nucleoside biosynthesis; alpha-ribazole biosynthesis; alpha-ribazole from 5,6-dimethylbenzimidazole: step 2/2. In terms of biological role, endonuclease that displays both RNase H activity with a hybrid RNA/DNA substrate as well as double-stranded RNase activity. As the only authenticated RNase HI in M.tuberculosis, probably plays an important role in the physiology of this organism, being likely involved in bacterial replication. Functionally, catalyzes the hydrolysis of the phospho group from alpha-ribazole 5'-phosphate to form alpha-ribazole. May also catalyze the conversion of adenosylcobalamin 5'-phosphate to adenosylcobalamin (vitamin B12). Has a possible role in B12 recycling, but the primary role of the C-terminal domain of this phosphatase enzyme could be phosphate generation to help bacterial survival within the macrophage, which is a phosphate-deprived environment. This chain is Bifunctional protein Rv2228c, found in Mycobacterium tuberculosis (strain ATCC 25618 / H37Rv).